The chain runs to 207 residues: Dephospho-CoA kinase (207 aa).

One can recognise a DPCK domain in the interval 12-207 (LIGITGMIGG…LYSTLLGKML (196 aa)). Residue 20–25 (GGGKST) coordinates ATP.

Belongs to the CoaE family.

The protein localises to the cytoplasm. It catalyses the reaction 3'-dephospho-CoA + ATP = ADP + CoA + H(+). It functions in the pathway cofactor biosynthesis; coenzyme A biosynthesis; CoA from (R)-pantothenate: step 5/5. In terms of biological role, catalyzes the phosphorylation of the 3'-hydroxyl group of dephosphocoenzyme A to form coenzyme A. This Leptospira interrogans serogroup Icterohaemorrhagiae serovar copenhageni (strain Fiocruz L1-130) protein is Dephospho-CoA kinase.